Here is a 486-residue protein sequence, read N- to C-terminus: Cysteine--tRNA ligase (486 aa).

Zn(2+) is bound at residue C29. Positions 31–41 match the 'HIGH' region motif; the sequence is VTVYDYCHLGH. 3 residues coordinate Zn(2+): C214, H239, and E243. The 'KMSKS' region motif lies at 271–275; the sequence is KMSKS. Residue K274 coordinates ATP.

It belongs to the class-I aminoacyl-tRNA synthetase family. As to quaternary structure, monomer. Zn(2+) serves as cofactor.

The protein localises to the cytoplasm. The catalysed reaction is tRNA(Cys) + L-cysteine + ATP = L-cysteinyl-tRNA(Cys) + AMP + diphosphate. The chain is Cysteine--tRNA ligase from Trichormus variabilis (strain ATCC 29413 / PCC 7937) (Anabaena variabilis).